Consider the following 112-residue polypeptide: Putative transposase YkgN (112 aa).

It belongs to the transposase 8 family.

The sequence is that of Putative transposase YkgN (ykgN) from Escherichia coli (strain K12).